Consider the following 348-residue polypeptide: Rhodopsin (348 aa).

At Thr-1–Ala-33 the chain is on the extracellular side. Asn-12 carries an N-linked (GlcNAc...) asparagine glycan. Residues Phe-34–Val-58 form a helical membrane-spanning segment. The Cytoplasmic segment spans residues Thr-59 to Asn-70. A helical transmembrane segment spans residues Tyr-71–Tyr-93. At Thr-94–Cys-107 the chain is on the extracellular side. A disulfide bridge connects residues Cys-107 and Cys-184. Residues Asn-108–Ile-130 form a helical membrane-spanning segment. A 'Ionic lock' involved in activated form stabilization motif is present at residues Glu-131 to Trp-133. Over Glu-131–His-149 the chain is Cytoplasmic. The chain crosses the membrane as a helical span at residues Ala-150–Val-170. At Gly-171 to Thr-199 the chain is on the extracellular side. Asn-197 is a glycosylation site (N-linked (GlcNAc...) asparagine). A helical membrane pass occupies residues Phe-200–Gly-221. Topologically, residues Arg-222 to Arg-249 are cytoplasmic. Residues Met-250 to Phe-271 traverse the membrane as a helical segment. Topologically, residues Val-272–Leu-283 are extracellular. The chain crosses the membrane as a helical span at residues Phe-284–Cys-305. Lys-293 carries the N6-(retinylidene)lysine modification. Over Met-306–Ala-348 the chain is Cytoplasmic. A lipid anchor (S-palmitoyl cysteine) is attached at Cys-320. Residues Gly-327–Ala-348 are disordered. The span at Ala-332–Ala-348 shows a compositional bias: low complexity.

This sequence belongs to the G-protein coupled receptor 1 family. Opsin subfamily. In terms of processing, phosphorylated on some or all of the serine and threonine residues present in the C-terminal region. Post-translationally, contains one covalently linked retinal chromophore.

The protein resides in the membrane. It is found in the cell projection. The protein localises to the cilium. Its subcellular location is the photoreceptor outer segment. Functionally, photoreceptor required for image-forming vision at low light intensity. While most salt water fish species use retinal as chromophore, most freshwater fish use 3-dehydroretinal, or a mixture of retinal and 3-dehydroretinal. Light-induced isomerization of 11-cis to all-trans retinal triggers a conformational change that activates signaling via G-proteins. Subsequent receptor phosphorylation mediates displacement of the bound G-protein alpha subunit by arrestin and terminates signaling. This chain is Rhodopsin (rho), found in Sargocentron xantherythrum (Hawaiian squirrelfish).